A 619-amino-acid chain; its full sequence is ESX-2 secretion system protein EccA2 (619 aa).

373 to 380 (GPPGTGKT) contacts ATP.

The protein belongs to the CbxX/CfxQ family. Part of the ESX-2 / type VII secretion system (T7SS), which is composed of cytosolic and membrane components. Residues 522-619 interact with an artificial EsxB-EsxA heterodimer from the adjacent ESX-1 locus.

The protein localises to the cytoplasm. In terms of biological role, shows ATPase activity. Could provide energy for export of ESX-2 substrates. The protein is ESX-2 secretion system protein EccA2 (eccA2) of Mycobacterium tuberculosis (strain ATCC 25618 / H37Rv).